Here is a 331-residue protein sequence, read N- to C-terminus: Cytosolic Fe-S cluster assembly factor NBP35 (331 aa).

Polar residues predominate over residues 1–10 (MSPSQTQIEK). The tract at residues 1–32 (MSPSQTQIEKSQLAAPEPEHCPGPESELAGQG) is disordered. The [4Fe-4S] cluster site is built by cysteine 21, cysteine 35, cysteine 38, and cysteine 44. 75–82 (GKGGVGKS) contributes to the ATP binding site. [4Fe-4S] cluster is bound by residues cysteine 249 and cysteine 252.

The protein belongs to the Mrp/NBP35 ATP-binding proteins family. NUBP1/NBP35 subfamily. In terms of assembly, heterotetramer of 2 NBP35 and 2 CFD1 chains. The cofactor is [4Fe-4S] cluster.

Its subcellular location is the cytoplasm. It localises to the nucleus. Its function is as follows. Component of the cytosolic iron-sulfur (Fe/S) protein assembly (CIA) machinery. Required for maturation of extramitochondrial Fe-S proteins. The NBP35-CFD1 heterotetramer forms a Fe-S scaffold complex, mediating the de novo assembly of an Fe-S cluster and its transfer to target apoproteins. Required for biogenesis and export of both ribosomal subunits, which may reflect a role in assembly of the Fe/S clusters in RLI1, a protein which performs rRNA processing and ribosome export. The sequence is that of Cytosolic Fe-S cluster assembly factor NBP35 from Candida albicans (strain SC5314 / ATCC MYA-2876) (Yeast).